Here is a 728-residue protein sequence, read N- to C-terminus: Methionine--tRNA ligase (728 aa).

Positions 13-23 match the 'HIGH' region motif; the sequence is PYANGSIHLGH. 4 residues coordinate Zn(2+): cysteine 144, cysteine 147, cysteine 157, and cysteine 160. The 'KMSKS' region signature appears at 348 to 352; sequence KMSKS. Residue lysine 351 coordinates ATP. Residues 585–620 are disordered; sequence LAPAKSQQVAQAVETMEKNSSTTPAPAKEGEAGQAS. Positions 628 to 728 constitute a tRNA-binding domain; the sequence is DFGKIDLRVA…EGARPGMKVK (101 aa).

The protein belongs to the class-I aminoacyl-tRNA synthetase family. MetG type 1 subfamily. Homodimer. Requires Zn(2+) as cofactor.

The protein resides in the cytoplasm. It carries out the reaction tRNA(Met) + L-methionine + ATP = L-methionyl-tRNA(Met) + AMP + diphosphate. In terms of biological role, is required not only for elongation of protein synthesis but also for the initiation of all mRNA translation through initiator tRNA(fMet) aminoacylation. This chain is Methionine--tRNA ligase, found in Nitrosospira multiformis (strain ATCC 25196 / NCIMB 11849 / C 71).